We begin with the raw amino-acid sequence, 196 residues long: Protein GrpE (196 aa).

Residues 1–41 (MSSKEQKTPEGQAPEEIITEQHDDVEAVEPEVSAEQVDPRD) are disordered.

The protein belongs to the GrpE family. As to quaternary structure, homodimer.

The protein resides in the cytoplasm. In terms of biological role, participates actively in the response to hyperosmotic and heat shock by preventing the aggregation of stress-denatured proteins, in association with DnaK and GrpE. It is the nucleotide exchange factor for DnaK and may function as a thermosensor. Unfolded proteins bind initially to DnaJ; upon interaction with the DnaJ-bound protein, DnaK hydrolyzes its bound ATP, resulting in the formation of a stable complex. GrpE releases ADP from DnaK; ATP binding to DnaK triggers the release of the substrate protein, thus completing the reaction cycle. Several rounds of ATP-dependent interactions between DnaJ, DnaK and GrpE are required for fully efficient folding. This is Protein GrpE from Klebsiella pneumoniae (strain 342).